A 371-amino-acid polypeptide reads, in one-letter code: LIM domain-binding protein 2 (371 aa).

2 disordered regions span residues 244–289 (APPA…AAAN) and 325–371 (QYDA…QASQ). Residues 263-289 (STSSTSNSSAGNNANSTNSKKKSAAAN) show a composition bias toward low complexity. The LIM interaction domain (LID) domain maps to 296-335 (DVMVVGEPTLMGGEFGDEDERLITRLENTQYDAANGMDDE). The segment covering 339-371 (NNSPALGNNSPWNSKPPANQETKSENPTPQASQ) has biased composition (polar residues).

It belongs to the LDB family. In terms of tissue distribution, first expressed at stages 15-16 in presumptive limb mesoderm. As limb outgrowth proceeds, expressed in the entire limb bud, concentrating in the distal mesoderm throughout limb development. Both hindlimbs and forelimbs exhibit similar expression patterns.

It localises to the nucleus. In terms of biological role, binds to the LIM domain of a wide variety of LIM domain-containing transcription factors. This chain is LIM domain-binding protein 2 (LDB2), found in Gallus gallus (Chicken).